We begin with the raw amino-acid sequence, 405 residues long: Tyrosine--tRNA ligase (405 aa).

Residues 48-57 (PSRPDLHLGH) carry the 'HIGH' region motif. The 'KMSKS' region motif lies at 232–236 (KMSKS). Residue Lys-235 coordinates ATP. Residues 339 to 400 (LPLVDLLTTL…AGKRKFFRIA (62 aa)) form the S4 RNA-binding domain.

It belongs to the class-I aminoacyl-tRNA synthetase family. TyrS type 2 subfamily. Homodimer.

The protein resides in the cytoplasm. It carries out the reaction tRNA(Tyr) + L-tyrosine + ATP = L-tyrosyl-tRNA(Tyr) + AMP + diphosphate + H(+). Its function is as follows. Catalyzes the attachment of tyrosine to tRNA(Tyr) in a two-step reaction: tyrosine is first activated by ATP to form Tyr-AMP and then transferred to the acceptor end of tRNA(Tyr). This Chlorobium luteolum (strain DSM 273 / BCRC 81028 / 2530) (Pelodictyon luteolum) protein is Tyrosine--tRNA ligase.